A 240-amino-acid polypeptide reads, in one-letter code: Glutamine transport ATP-binding protein GlnQ (240 aa).

The 235-residue stretch at 2 to 236 folds into the ABC transporter domain; sequence IEFKNVSKHF…PPSQRLQEFL (235 aa). An ATP-binding site is contributed by 34–41; it reads GPSGSGKS.

This sequence belongs to the ABC transporter superfamily. Heterotetramer with 2 subunits of GlnQ and 2 subunits of GlnP.

Its subcellular location is the cell inner membrane. Its function is as follows. Part of the binding-protein-dependent transport system for glutamine. Probably responsible for energy coupling to the transport system. This chain is Glutamine transport ATP-binding protein GlnQ (glnQ), found in Escherichia coli (strain K12).